The sequence spans 206 residues: Ribosomal RNA small subunit methyltransferase G (206 aa).

S-adenosyl-L-methionine-binding positions include G71, F76, 122–123 (AE), and R135.

This sequence belongs to the methyltransferase superfamily. RNA methyltransferase RsmG family.

The protein localises to the cytoplasm. Specifically methylates the N7 position of a guanine in 16S rRNA. This is Ribosomal RNA small subunit methyltransferase G from Bacteroides fragilis (strain ATCC 25285 / DSM 2151 / CCUG 4856 / JCM 11019 / LMG 10263 / NCTC 9343 / Onslow / VPI 2553 / EN-2).